The chain runs to 309 residues: Glutaminase (309 aa).

Residues serine 64, asparagine 114, glutamate 160, asparagine 167, tyrosine 191, tyrosine 243, and valine 261 each coordinate substrate.

Belongs to the glutaminase family. As to quaternary structure, homotetramer.

It carries out the reaction L-glutamine + H2O = L-glutamate + NH4(+). The sequence is that of Glutaminase from Rhizobium leguminosarum bv. trifolii (strain WSM2304).